The primary structure comprises 639 residues: 1-deoxy-D-xylulose-5-phosphate synthase (639 aa).

Residues His-79 and 120 to 122 contribute to the thiamine diphosphate site; that span reads GHS. Asp-151 serves as a coordination point for Mg(2+). Thiamine diphosphate-binding positions include 152–153, Asn-180, Tyr-289, and Glu-371; that span reads GS. Asn-180 is a binding site for Mg(2+).

This sequence belongs to the transketolase family. DXPS subfamily. As to quaternary structure, homodimer. Mg(2+) is required as a cofactor. Thiamine diphosphate serves as cofactor.

It catalyses the reaction D-glyceraldehyde 3-phosphate + pyruvate + H(+) = 1-deoxy-D-xylulose 5-phosphate + CO2. It participates in metabolic intermediate biosynthesis; 1-deoxy-D-xylulose 5-phosphate biosynthesis; 1-deoxy-D-xylulose 5-phosphate from D-glyceraldehyde 3-phosphate and pyruvate: step 1/1. Catalyzes the acyloin condensation reaction between C atoms 2 and 3 of pyruvate and glyceraldehyde 3-phosphate to yield 1-deoxy-D-xylulose-5-phosphate (DXP). In Agrobacterium fabrum (strain C58 / ATCC 33970) (Agrobacterium tumefaciens (strain C58)), this protein is 1-deoxy-D-xylulose-5-phosphate synthase.